The sequence spans 881 residues: Alanine--tRNA ligase (881 aa).

Residues His564, His568, Cys673, and His677 each contribute to the Zn(2+) site. The tract at residues 848–867 (GQGGGGRPDMAQAGGPDGDK) is disordered.

The protein belongs to the class-II aminoacyl-tRNA synthetase family. Zn(2+) serves as cofactor.

Its subcellular location is the cytoplasm. It carries out the reaction tRNA(Ala) + L-alanine + ATP = L-alanyl-tRNA(Ala) + AMP + diphosphate. Its function is as follows. Catalyzes the attachment of alanine to tRNA(Ala) in a two-step reaction: alanine is first activated by ATP to form Ala-AMP and then transferred to the acceptor end of tRNA(Ala). Also edits incorrectly charged Ser-tRNA(Ala) and Gly-tRNA(Ala) via its editing domain. This Hyphomonas neptunium (strain ATCC 15444) protein is Alanine--tRNA ligase.